We begin with the raw amino-acid sequence, 337 residues long: MKKWLFPFAFVATLAGCSVSNESKQQANDTYQKSDAALPLFAPLNTAGVSLPKQDTTYQLPQVKVKKADQVDIRPPETPLAIIQNSIAQFDGERALIAYPIDKREVYNLQQVARLLKEQGIGYQLTNEKIVTDWAPTGRADEIGDTQVRYEIEQVSSGNYSALFVSILQMKRNEVVFSPHLADKQRYSSDRLNQLVGELDASYRKQVRDLNNSGLMPIQSVLGTDSNGRTALVLGAPFNHAWTKLGQVLPQLEFDIKDEIIGRGVRELKYRPAGAKSWWWPFGRAEGSSGLKTGTYFMQLSALGKQSAVVMTDDDGNALSGEQAQALYQALQNLLAK.

A signal peptide spans 1 to 16; sequence MKKWLFPFAFVATLAG. Cys-17 is lipidated: N-palmitoyl cysteine. Cys-17 carries the S-diacylglycerol cysteine lipid modification.

It belongs to the BamC family. Part of the Bam complex.

It is found in the cell outer membrane. In terms of biological role, part of the outer membrane protein assembly complex, which is involved in assembly and insertion of beta-barrel proteins into the outer membrane. This chain is Outer membrane protein assembly factor BamC, found in Pasteurella multocida (strain Pm70).